A 609-amino-acid chain; its full sequence is Mitochondrial nucleoid-associated protein 1 (609 aa).

The Extracellular segment spans residues 1–554; the sequence is MSDNPPRMEV…CNTTIRKSGF (554 aa). 2 disordered regions span residues 133 to 163 and 406 to 425; these read QEET…GESR and SPEG…QASH. Over residues 146 to 161 the composition is skewed to basic and acidic residues; it reads TSPKRELAEDLPKSGE. Residues 555-571 traverse the membrane as a helical segment; the sequence is GGITMLSTGYFVLCCSW. Residues 572 to 609 are Cytoplasmic-facing; it reads SFRRLKKLCRPLPWKSTVPPSVGVAKTTGDCRSKTCLD.

Its subcellular location is the mitochondrion inner membrane. The protein resides in the mitochondrion matrix. The protein localises to the mitochondrion nucleoid. In terms of biological role, critical regulator of mitochondrial DNA (mtDNA) abundance. Binds dsDNA throughout the mitochondrial genome without sequence specificity and controls mtDNA copy number by promoting its replication. Also plays important roles in mitochondrial metabolism and cell proliferation. In Pongo abelii (Sumatran orangutan), this protein is Mitochondrial nucleoid-associated protein 1.